Reading from the N-terminus, the 544-residue chain is Chaperonin GroEL (544 aa).

Residues 30–33 (TLGP), K51, 87–91 (DGTTT), G415, and D495 each bind ATP.

Belongs to the chaperonin (HSP60) family. In terms of assembly, forms a cylinder of 14 subunits composed of two heptameric rings stacked back-to-back. Interacts with the co-chaperonin GroES.

The protein localises to the cytoplasm. The enzyme catalyses ATP + H2O + a folded polypeptide = ADP + phosphate + an unfolded polypeptide.. Together with its co-chaperonin GroES, plays an essential role in assisting protein folding. The GroEL-GroES system forms a nano-cage that allows encapsulation of the non-native substrate proteins and provides a physical environment optimized to promote and accelerate protein folding. The sequence is that of Chaperonin GroEL from Aeromonas salmonicida (strain A449).